The sequence spans 345 residues: Anthranilate phosphoribosyltransferase (345 aa).

5-phospho-alpha-D-ribose 1-diphosphate is bound by residues Gly80, 83-84, Thr88, 90-93, 108-116, and Ser120; these read GD, NIST, and KHGNRSVSS. An anthranilate-binding site is contributed by Gly80. Ser92 provides a ligand contact to Mg(2+). Anthranilate is bound at residue Asn111. An anthranilate-binding site is contributed by Arg166. Mg(2+) contacts are provided by Asp225 and Glu226.

It belongs to the anthranilate phosphoribosyltransferase family. As to quaternary structure, homodimer. It depends on Mg(2+) as a cofactor.

The catalysed reaction is N-(5-phospho-beta-D-ribosyl)anthranilate + diphosphate = 5-phospho-alpha-D-ribose 1-diphosphate + anthranilate. The protein operates within amino-acid biosynthesis; L-tryptophan biosynthesis; L-tryptophan from chorismate: step 2/5. Catalyzes the transfer of the phosphoribosyl group of 5-phosphorylribose-1-pyrophosphate (PRPP) to anthranilate to yield N-(5'-phosphoribosyl)-anthranilate (PRA). The sequence is that of Anthranilate phosphoribosyltransferase from Acetivibrio thermocellus (strain ATCC 27405 / DSM 1237 / JCM 9322 / NBRC 103400 / NCIMB 10682 / NRRL B-4536 / VPI 7372) (Clostridium thermocellum).